We begin with the raw amino-acid sequence, 438 residues long: Phosphatidylcholine-sterol acyltransferase (438 aa).

The first 24 residues, 1–24 (MGLPGSPWQRVLLLLGLLLPPATP), serve as a signal peptide directing secretion. N44 carries an N-linked (GlcNAc...) asparagine glycan. Residues C74 and C98 are joined by a disulfide bond. N-linked (GlcNAc...) asparagine glycosylation is present at N108. Residue S205 is the Nucleophile of the active site. N296 carries an N-linked (GlcNAc...) asparagine glycan. C337 and C380 form a disulfide bridge. The active-site Charge relay system is D369. N-linked (GlcNAc...) asparagine glycosylation occurs at N397. H401 (charge relay system) is an active-site residue. N408 carries N-linked (GlcNAc...) asparagine glycosylation.

Belongs to the AB hydrolase superfamily. Lipase family. As to expression, detected in blood plasma. Produced and secreted by astrocytes (at protein level). Abundantly expressed in liver, brain and testis with highest levels in liver. In the brain, found in cerebellum, cerebral cortex, hippocampus and brain stem. Located to neurons and neuroglia.

It is found in the secreted. The enzyme catalyses a sterol + a 1,2-diacyl-sn-glycero-3-phosphocholine = a sterol ester + a 1-acyl-sn-glycero-3-phosphocholine. It catalyses the reaction a 1-O-alkyl-2-acetyl-sn-glycero-3-phosphocholine + H2O = a 1-O-alkyl-sn-glycero-3-phosphocholine + acetate + H(+). It carries out the reaction a 1-hexadecanoyl-2-acyl-sn-glycero-3-phosphocholine + (24S)-hydroxycholesterol = (24S)-24-hydroxycholesterol ester + 1-hexadecanoyl-sn-glycero-3-phosphocholine. The catalysed reaction is (24S)-hydroxycholesterol + 1-hexadecanoyl-2-(9Z,12Z-octadecadienoyl)-sn-glycero-3-phosphocholine = (24S)-hydroxycholesterol 3-linoleoate + 1-hexadecanoyl-sn-glycero-3-phosphocholine. The enzyme catalyses 1-hexadecanoyl-2-(5Z,8Z,11Z,14Z-eicosatetraenoyl)-sn-glycero-3-phosphocholine + cholesterol = cholesteryl (5Z,8Z,11Z,14Z)-eicosatetraenoate + 1-hexadecanoyl-sn-glycero-3-phosphocholine. It catalyses the reaction 1-hexadecanoyl-2-(9Z-octadecenoyl)-sn-glycero-3-phosphocholine + cholesterol = cholesteryl (9Z-octadecenoate) + 1-hexadecanoyl-sn-glycero-3-phosphocholine. It carries out the reaction 1-hexadecanoyl-2-(8Z,11Z,14Z-eicosatrienoyl)-sn-glycero-3-phosphocholine + cholesterol = cholesteryl (8Z,11Z,14Z)-eicosatrienoate + 1-hexadecanoyl-sn-glycero-3-phosphocholine. The catalysed reaction is 1-hexadecanoyl-2-(5Z,8Z,11Z-eicosatrienoyl)-sn-glycero-3-phosphocholine + cholesterol = cholesteryl (5Z,8Z,11Z)-eicosatrienoate + 1-hexadecanoyl-sn-glycero-3-phosphocholine. The enzyme catalyses 1-hexadecanoyl-2-(5Z,8Z,11Z,14Z,17Z-eicosapentaenoyl)-sn-glycero-3-phosphocholine + cholesterol = (5Z,8Z,11Z,14Z,17Z-eicosapentaenoyl)-cholesterol + 1-hexadecanoyl-sn-glycero-3-phosphocholine. It catalyses the reaction 1-hexadecanoyl-2-(9Z,12Z-octadecadienoyl)-sn-glycero-3-phosphocholine + cholesterol = cholesteryl (9Z,12Z)-octadecadienoate + 1-hexadecanoyl-sn-glycero-3-phosphocholine. It carries out the reaction 1-hexadecanoyl-2-(6Z,9Z,12Z-octadecatrienoyl)-sn-glycero-3-phosphocholine + cholesterol = (6Z,9Z,12Z-octadecatrienoyl)-cholesterol + 1-hexadecanoyl-sn-glycero-3-phosphocholine. The catalysed reaction is 1-hexadecanoyl-2-(11Z,14Z,17Z-eicosatrienoyl)-sn-glycero-3-phosphocholine + cholesterol = (11Z,14Z,17Z-eicosatrienoyl)-cholesterol + 1-hexadecanoyl-sn-glycero-3-phosphocholine. The enzyme catalyses 1-hexadecanoyl-2-(9Z,12Z,15Z-octadecatrienoyl)-sn-glycero-3-phosphocholine + cholesterol = (9Z,12Z,15Z-octadecatrienoyl)-cholesterol + 1-hexadecanoyl-sn-glycero-3-phosphocholine. It catalyses the reaction 1-hexadecanoyl-2-(9Z,12Z-octadecadienoyl)-sn-glycero-3-phosphocholine + H2O = (9Z,12Z)-octadecadienoate + 1-hexadecanoyl-sn-glycero-3-phosphocholine + H(+). It carries out the reaction 1-hexadecanoyl-2-(5Z,8Z,11Z,14Z-eicosatetraenoyl)-sn-glycero-3-phosphocholine + H2O = 1-hexadecanoyl-sn-glycero-3-phosphocholine + (5Z,8Z,11Z,14Z)-eicosatetraenoate + H(+). The catalysed reaction is a 1-O-alkyl-2-acetyl-sn-glycero-3-phosphocholine + 1-hexadecanoyl-sn-glycero-3-phosphocholine = 1-hexadecanoyl-2-acetyl-sn-glycero-3-phosphocholine + a 1-O-alkyl-sn-glycero-3-phosphocholine. APOA1 is the most potent activator in plasma. Also activated by APOE, APOC1 and APOA4. Central enzyme in the extracellular metabolism of plasma lipoproteins. Synthesized mainly in the liver and secreted into plasma where it converts cholesterol and phosphatidylcholines (lecithins) to cholesteryl esters and lysophosphatidylcholines on the surface of high and low density lipoproteins (HDLs and LDLs). The cholesterol ester is then transported back to the liver. Also produced in the brain by primary astrocytes, and esterifies free cholesterol on nascent APOE-containing lipoproteins secreted from glia and influences cerebral spinal fluid (CSF) APOE- and APOA1 levels. Together with APOE and the cholesterol transporter ABCA1, plays a key role in the maturation of glial-derived, nascent lipoproteins. Required for remodeling high-density lipoprotein particles into their spherical forms. Has a preference for plasma 16:0-18:2 or 18:O-18:2 phosphatidylcholines. Catalyzes the hydrolysis of 1-O-alkyl-2-acetyl-sn-glycero-3-phosphocholine (platelet-activating factor or PAF) to 1-O-alkyl-sn-glycero-3-phosphocholine (lyso-PAF). Also catalyzes the transfer of the acetate group from PAF to 1-hexadecanoyl-sn-glycero-3-phosphocholine forming lyso-PAF. Catalyzes the esterification of (24S)-hydroxycholesterol (24(S)OH-C), also known as cerebrosterol to produce 24(S)OH-C monoesters. In Mus musculus (Mouse), this protein is Phosphatidylcholine-sterol acyltransferase (Lcat).